A 208-amino-acid chain; its full sequence is Protein-L-isoaspartate O-methyltransferase (208 aa).

S59 is an active-site residue.

Belongs to the methyltransferase superfamily. L-isoaspartyl/D-aspartyl protein methyltransferase family.

The protein resides in the cytoplasm. It catalyses the reaction [protein]-L-isoaspartate + S-adenosyl-L-methionine = [protein]-L-isoaspartate alpha-methyl ester + S-adenosyl-L-homocysteine. Its function is as follows. Catalyzes the methyl esterification of L-isoaspartyl residues in peptides and proteins that result from spontaneous decomposition of normal L-aspartyl and L-asparaginyl residues. It plays a role in the repair and/or degradation of damaged proteins. The polypeptide is Protein-L-isoaspartate O-methyltransferase (Photorhabdus laumondii subsp. laumondii (strain DSM 15139 / CIP 105565 / TT01) (Photorhabdus luminescens subsp. laumondii)).